The following is a 624-amino-acid chain: (-)-beta-phellandrene synthase 3, chloroplastic (624 aa).

The transit peptide at 1–48 directs the protein to the chloroplast; it reads MAIVSSVPLASKSCLHKSLISSIHKLKPFCRTIPTLGMSRPGKYVMPS. The Mg(2+) site is built by aspartate 375, aspartate 379, and aspartate 527. Positions 375-379 match the DDXXD motif motif; the sequence is DDMYD.

This sequence belongs to the terpene synthase family. Tpsd subfamily. Requires Mg(2+) as cofactor. It depends on Mn(2+) as a cofactor.

The protein resides in the plastid. The protein localises to the chloroplast. It catalyses the reaction (2E)-geranyl diphosphate = (-)-beta-phellandrene + diphosphate. Its pathway is terpene metabolism; oleoresin biosynthesis. Terpene synthase (TPS) involved in the biosynthesis of monoterpene natural products included in conifer oleoresin secretions and volatile emissions; these compounds contribute to biotic and abiotic stress defense against herbivores and pathogens. Catalyzes the conversion of (2E)-geranyl diphosphate (GPP) to (-)-beta-phellandrene. This chain is (-)-beta-phellandrene synthase 3, chloroplastic, found in Picea sitchensis (Sitka spruce).